The chain runs to 415 residues: MDEVLNLAKKAKEASKKLAQLSTEQKNRALLKIAQYLEENMEKILTENQKDLAEAKKGGLSPAFIERLTLNEKRILDMAEGVRQVAKLPDPVGEVLGMTRRPNGLVIGQVRVPLGVVGIIYESRPNVTVDAAALCLKAGNAVILRGGKEAFNSNLALVTLMEEALRSEEIPEGAVGMIKTTSRDAANYLMRLNGYLDVLIPRGGAGLIKTVVENSTVPVIETGVGNCHVYVEEDADLEMAERIIINAKCQRPAVCNAMETLLVHEKIAPVFLPQIGKALKENGVEIRGCEVTRRYIPDALPATEEDYYTEFLDLILAVRVVRDLDEAIAHITKYGSGHSEAIVTRDYFKARRFTEEVDAAAVYVNASTRFTDGFEFGFGAEIGISTQKLHARGPMGLKELTTTKYVIYGTGQIRG.

Belongs to the gamma-glutamyl phosphate reductase family.

It localises to the cytoplasm. It catalyses the reaction L-glutamate 5-semialdehyde + phosphate + NADP(+) = L-glutamyl 5-phosphate + NADPH + H(+). The protein operates within amino-acid biosynthesis; L-proline biosynthesis; L-glutamate 5-semialdehyde from L-glutamate: step 2/2. Catalyzes the NADPH-dependent reduction of L-glutamate 5-phosphate into L-glutamate 5-semialdehyde and phosphate. The product spontaneously undergoes cyclization to form 1-pyrroline-5-carboxylate. This Carboxydothermus hydrogenoformans (strain ATCC BAA-161 / DSM 6008 / Z-2901) protein is Gamma-glutamyl phosphate reductase.